A 497-amino-acid chain; its full sequence is Beta-glucosidase 8 (497 aa).

The signal sequence occupies residues 1-22 (MKHFNLLSIILVIVLATSYIDA). Gln42 is a binding site for a beta-D-glucoside. Asn65 carries an N-linked (GlcNAc...) asparagine glycan. Residues His139 and 184–185 (NE) each bind a beta-D-glucoside. Glu185 (proton donor) is an active-site residue. N-linked (GlcNAc...) asparagine glycosylation is present at Asn202. Tyr319 is a binding site for a beta-D-glucoside. N-linked (GlcNAc...) asparagine glycosylation occurs at Asn354. Residues Glu387, Trp430, and Phe446 each contribute to the a beta-D-glucoside site. The active-site Nucleophile is Glu387. 3 N-linked (GlcNAc...) asparagine glycosylation sites follow: Asn452, Asn474, and Asn490.

Belongs to the glycosyl hydrolase 1 family.

The catalysed reaction is Hydrolysis of terminal, non-reducing beta-D-glucosyl residues with release of beta-D-glucose.. This is Beta-glucosidase 8 from Arabidopsis thaliana (Mouse-ear cress).